The primary structure comprises 316 residues: UDP-N-acetylglucosamine transporter yea4 (316 aa).

The Cytoplasmic portion of the chain corresponds to 1 to 3 (MIA). The chain crosses the membrane as a helical span at residues 4–24 (SALSFIFGGCCSNAYALEALV). Over 25 to 31 (REFPSSG) the chain is Lumenal. Residues 32–52 (ILITFSQFILITIEGLIYFLL) traverse the membrane as a helical segment. Residues 53–67 (NDVQSLKHPKVPRKR) lie on the Cytoplasmic side of the membrane. Residues 68–88 (WFVVVVMFFAINVLNNVALGF) form a helical membrane-spanning segment. Topologically, residues 89–120 (DISVPVHIILRSSGPLTTMAVGRILAGKRYSS) are lumenal. The chain crosses the membrane as a helical span at residues 121 to 141 (LQIGSVFILTIGVIIATLGNA). Residues 142–153 (KDLHLHVESMTR) lie on the Cytoplasmic side of the membrane. A helical transmembrane segment spans residues 154–174 (FGIGFTILVITQILGAIMGLV). Over 175–187 (LENTYRIYGSDWR) the chain is Lumenal. Residues 188-208 (ESLFYTHALSLPFFLFLLRPI) traverse the membrane as a helical segment. Residues 209-214 (RSQWND) lie on the Cytoplasmic side of the membrane. A helical transmembrane segment spans residues 215-235 (LFAIHTKGFLNLPSGVWYLCF). Residues 236–274 (NTLAQYFCVRGVNALGAETSALTVSVVLNVRKFVSLCLS) lie on the Lumenal side of the membrane. Residues 275 to 295 (LILFENEMGPAVKFGALLVFG) form a helical membrane-spanning segment. Residues 296–316 (SSAVYASARSKPKTNGLKKND) are Cytoplasmic-facing.

The protein belongs to the nucleotide-sugar transporter family. SLC35B subfamily.

The protein resides in the endoplasmic reticulum. It is found in the endoplasmic reticulum membrane. Its function is as follows. Sugar transporter that specifically mediates the transport of UDP-N-acetylglucosamine (UDP-GlcNAc) and is required for cell wall chitin synthesis. The chain is UDP-N-acetylglucosamine transporter yea4 (yea4) from Schizosaccharomyces pombe (strain 972 / ATCC 24843) (Fission yeast).